A 226-amino-acid polypeptide reads, in one-letter code: PKHD-type hydroxylase Sfri_0612 (226 aa).

Residues 77–177 (KIFPPCFNRY…RIAAITWMQS (101 aa)) enclose the Fe2OG dioxygenase domain. Residues His-95, Asp-97, and His-158 each contribute to the Fe cation site. Arg-168 lines the 2-oxoglutarate pocket.

Fe(2+) serves as cofactor. It depends on L-ascorbate as a cofactor.

This chain is PKHD-type hydroxylase Sfri_0612, found in Shewanella frigidimarina (strain NCIMB 400).